The sequence spans 245 residues: Complement C1q subcomponent subunit A (245 aa).

Positions 1-22 are cleaved as a signal peptide; sequence MEGPRGWLVLCVLAISLASMVT. Positions 27 to 38 are enriched in basic and acidic residues; it reads RAPDGKKGEAGR. Residues 27–114 are disordered; the sequence is RAPDGKKGEA…SPGNIKDQPR (88 aa). One can recognise a Collagen-like domain in the interval 31–109; it reads GKKGEAGRPG…KGTKGSPGNI (79 aa). K33 carries the 5-hydroxylysine modification. K33 carries O-linked (Gal...) hydroxylysine glycosylation. 4-hydroxyproline occurs at positions 39 and 45. A 5-hydroxylysine modification is found at K48. A glycan (O-linked (Gal...) hydroxylysine) is linked at K48. 4-hydroxyproline occurs at positions 54 and 57. K67 carries the post-translational modification 5-hydroxylysine. K67 carries an O-linked (Gal...) hydroxylysine glycan. P73, P79, and P85 each carry 4-hydroxyproline. K100 is modified (5-hydroxylysine). Residue K100 is glycosylated (O-linked (Gal...) hydroxylysine). In terms of domain architecture, C1q spans 110-245; it reads KDQPRPAFSA…FSGFLIFPSA (136 aa). N-linked (GlcNAc...) asparagine glycosylation is present at N146. C172 and C190 are disulfide-bonded. Q199 contributes to the Ca(2+) binding site.

Core component of the complement C1 complex, a calcium-dependent complex composed of 1 molecule of the C1Q subcomplex, 2 molecules of C1R and 2 molecules of C1S. The C1Q subcomplex is composed 18 subunits: 3 chains of C1QA, C1QB, and C1QC trimerize to form 6 collagen-like triple helices connected to six globular ligand-recognition modules (C1q domain). Interacts with CR1 (via Sushi 24 and Sushi 25 domains). Interacts (via C-terminus) with CD33; this interaction activates CD33 inhibitory motifs. As to quaternary structure, (Microbial infection) Interacts with Staphylococcus aureus protein Cna; this interaction results in the inhibition of the classical complement pathway. O-linked glycans are assumed to be the Glc-Gal disaccharides typically found as secondary modifications of hydroxylated lysines in collagen-like domains.

It localises to the secreted. The protein localises to the cell surface. Its activity is regulated as follows. The C1Q subcomplex is inhibited by sulfated molecules, such as triterpenoid sulfates, heparan sulfate, or chondroitin sulfates. Functionally, core component of the complement C1 complex, a multiprotein complex that initiates the classical pathway of the complement system, a cascade of proteins that leads to phagocytosis and breakdown of pathogens and signaling that strengthens the adaptive immune system. The classical complement pathway is initiated by the C1Q subcomplex of the C1 complex, which specifically binds IgG or IgM immunoglobulins complexed with antigens, forming antigen-antibody complexes on the surface of pathogens: C1QA, together with C1QB and C1QC, specifically recognizes and binds the Fc regions of IgG or IgM via its C1q domain. Immunoglobulin-binding activates the proenzyme C1R, which cleaves C1S, initiating the proteolytic cascade of the complement system. The C1Q subcomplex is activated by a hexamer of IgG complexed with antigens, while it is activated by a pentameric IgM. The C1Q subcomplex also recognizes and binds phosphatidylserine exposed on the surface of cells undergoing programmed cell death, possibly promoting activation of the complement system. The polypeptide is Complement C1q subcomponent subunit A (Homo sapiens (Human)).